The sequence spans 702 residues: Vacuolar protein sorting-associated protein 52 homolog (702 aa).

The stretch at 505 to 535 (KEMGAKMEAVLENSEDSIEQLLTRMSAMQQT) forms a coiled coil.

It belongs to the VPS52 family. As to quaternary structure, component of the Golgi-associated retrograde protein (GARP) complex, also called VFT (VPS fifty-three) complex, composed of vps-51, vps-52, vps-53 and vps-54. Within the complex interacts with vps-53 and vps-54. Interacts with the small GTPases rab-6.1 and rab-6.2. Ubiquitously expressed, with particularly strong expression in neuronal cells. Specifically expressed in head and tail neurons and in the pharynx and ventral cord motor neurons.

Its subcellular location is the golgi apparatus. It localises to the trans-Golgi network. The protein resides in the perikaryon. The protein localises to the cytoplasm. It is found in the perinuclear region. Its function is as follows. Acts as a component of the GARP complex that is involved in retrograde transport from early and late endosomes to the trans-Golgi network (TGN). The GARP complex facilitates tethering as well as SNARE complex assembly at the Golgi. Plays a role in the trafficking of cargo to dense-core vesicles, probably through association with the EARP-interacting protein eipr-1. Important for neuronal function. The chain is Vacuolar protein sorting-associated protein 52 homolog from Caenorhabditis elegans.